Reading from the N-terminus, the 506-residue chain is Anaerobic nitric oxide reductase transcription regulator NorR (506 aa).

The residue at position 57 (aspartate 57) is a 4-aspartylphosphate. One can recognise a Sigma-54 factor interaction domain in the interval 187–416; it reads MIGLSPAMTQ…LEHAIHRAVV (230 aa). ATP is bound by residues 215-222 and 278-287; these read GETGTGKE and ADNGTLFLDE. Positions 481 to 500 form a DNA-binding region, H-T-H motif; it reads WAASARALETDVANLHRLAK.

The protein operates within nitrogen metabolism; nitric oxide reduction. Required for the expression of anaerobic nitric oxide (NO) reductase, acts as a transcriptional activator for at least the norVW operon. Activation also requires sigma-54. The polypeptide is Anaerobic nitric oxide reductase transcription regulator NorR (Salmonella paratyphi A (strain ATCC 9150 / SARB42)).